Consider the following 240-residue polypeptide: tRNA pseudouridine synthase A (240 aa).

D50 serves as the catalytic Nucleophile. Substrate is bound at residue Y109.

It belongs to the tRNA pseudouridine synthase TruA family. Homodimer.

The catalysed reaction is uridine(38/39/40) in tRNA = pseudouridine(38/39/40) in tRNA. Formation of pseudouridine at positions 38, 39 and 40 in the anticodon stem and loop of transfer RNAs. The sequence is that of tRNA pseudouridine synthase A from Campylobacter jejuni subsp. jejuni serotype O:6 (strain 81116 / NCTC 11828).